A 125-amino-acid chain; its full sequence is MADLAKIVEDLSALTVLEAAELSKLLEEKWGVSAAAAVAVAAPGGAGAAAPAAEEKDEFDVILTGDGGNKINVIKEVRAITGLGLGEAKALVEGAPKAVKEGASKAEAEELKKKLEAAGATVELK.

Belongs to the bacterial ribosomal protein bL12 family. As to quaternary structure, homodimer. Part of the ribosomal stalk of the 50S ribosomal subunit. Forms a multimeric L10(L12)X complex, where L10 forms an elongated spine to which 2 to 4 L12 dimers bind in a sequential fashion. Binds GTP-bound translation factors.

In terms of biological role, forms part of the ribosomal stalk which helps the ribosome interact with GTP-bound translation factors. Is thus essential for accurate translation. The polypeptide is Large ribosomal subunit protein bL12 (Sphingopyxis alaskensis (strain DSM 13593 / LMG 18877 / RB2256) (Sphingomonas alaskensis)).